Here is a 284-residue protein sequence, read N- to C-terminus: Bifunctional protein FolD (284 aa).

Residues 166-168 (GSS) and I232 each bind NADP(+).

The protein belongs to the tetrahydrofolate dehydrogenase/cyclohydrolase family. Homodimer.

It carries out the reaction (6R)-5,10-methylene-5,6,7,8-tetrahydrofolate + NADP(+) = (6R)-5,10-methenyltetrahydrofolate + NADPH. The catalysed reaction is (6R)-5,10-methenyltetrahydrofolate + H2O = (6R)-10-formyltetrahydrofolate + H(+). The protein operates within one-carbon metabolism; tetrahydrofolate interconversion. Catalyzes the oxidation of 5,10-methylenetetrahydrofolate to 5,10-methenyltetrahydrofolate and then the hydrolysis of 5,10-methenyltetrahydrofolate to 10-formyltetrahydrofolate. The polypeptide is Bifunctional protein FolD (Buchnera aphidicola subsp. Cinara cedri (strain Cc)).